The following is a 495-amino-acid chain: uncharacterized protein (495 aa).

A compositionally biased stretch (low complexity) spans 305–317 (DYNNNNNENYSGS). The tract at residues 305–404 (DYNNNNNENY…LDEEDNRKNK (100 aa)) is disordered. Over residues 335–347 (YDNDENNDDENND) the composition is skewed to acidic residues. The segment covering 348–363 (ENNNNNNNNNNNNNNN) has biased composition (low complexity). Residues 386–398 (SDDDEADNELDEE) show a composition bias toward acidic residues.

This is an uncharacterized protein from Dictyostelium discoideum (Social amoeba).